The primary structure comprises 419 residues: MFVDQARIFVKGGDGGNGIVAFRREKYVPMGGPSGGDGGRGANVILVADEGLKTLMDFKYRRHFKAERGAHGQGKNMHGAWGQDLRVKVPVGTVIKDDESGEVLADLLLQGQEAVVAKGGRGGRGNARFSSAINKAPSFSENGEPGEEKWIRLELKLLADVGLVGFPNAGKSTLISRVSAARPKIADYPFTTLVPNLGVVMTKERDTFVLADIPGLIEGAHQGLGLGHEFLRHIERTRVILFILDAAQTEGRDVVEDYRILYRELELHNPDLLKRPQLIVANKMDIPDARDNARRLESELGKTVHCISAVTGQGVEELMGKTYALLQAAPQEIPSGEEPVVRRFEEELPFKIDKVDGVFEVSGPRIEKLVVMTNFNSDEGLQRFQRTVIKMGLEEALKEHGIKEGDSVRIKDFEFEFTE.

In terms of domain architecture, Obg spans 1–158 (MFVDQARIFV…KWIRLELKLL (158 aa)). The OBG-type G domain occupies 159-327 (ADVGLVGFPN…LMGKTYALLQ (169 aa)). Residues 165–172 (GFPNAGKS), 190–194 (FTTLV), 212–215 (DIPG), 282–285 (NKMD), and 308–310 (SAV) contribute to the GTP site. Mg(2+)-binding residues include S172 and T192. In terms of domain architecture, OCT spans 342 to 419 (RRFEEELPFK…IKDFEFEFTE (78 aa)).

Belongs to the TRAFAC class OBG-HflX-like GTPase superfamily. OBG GTPase family. In terms of assembly, monomer. It depends on Mg(2+) as a cofactor.

Its subcellular location is the cytoplasm. An essential GTPase which binds GTP, GDP and possibly (p)ppGpp with moderate affinity, with high nucleotide exchange rates and a fairly low GTP hydrolysis rate. Plays a role in control of the cell cycle, stress response, ribosome biogenesis and in those bacteria that undergo differentiation, in morphogenesis control. This Syntrophomonas wolfei subsp. wolfei (strain DSM 2245B / Goettingen) protein is GTPase Obg.